The following is a 376-amino-acid chain: Enoyl-[acyl-carrier-protein] reductase, mitochondrial (376 aa).

Tyr-72 functions as the Proton donor in the catalytic mechanism. NADP(+)-binding positions include Asn-154, 182–185, 205–207, 280–283, 305–307, and Lys-369; these read TSAV, RDR, YGGM, and YWI.

It belongs to the zinc-containing alcohol dehydrogenase family. Quinone oxidoreductase subfamily. Homodimer.

It localises to the mitochondrion matrix. It catalyses the reaction a 2,3-saturated acyl-[ACP] + NADP(+) = a (2E)-enoyl-[ACP] + NADPH + H(+). Catalyzes the NADPH-dependent reduction of trans-2-enoyl thioesters in mitochondrial fatty acid synthesis (fatty acid synthesis type II). Fatty acid chain elongation in mitochondria uses acyl carrier protein (ACP) as an acyl group carrier, but the enzyme accepts both ACP and CoA thioesters as substrates in vitro. Required for respiration and the maintenance of the mitochondrial compartment. The protein is Enoyl-[acyl-carrier-protein] reductase, mitochondrial (ETR1) of Eremothecium gossypii (strain ATCC 10895 / CBS 109.51 / FGSC 9923 / NRRL Y-1056) (Yeast).